We begin with the raw amino-acid sequence, 129 residues long: MKSVQLCFLFCCWRAICCKSCELTNITITVEKEECRFCISINTTWCAGYCYTRDLVYKDPARPNIQKICTFKELAYETVKVPGCAHQADSLYTYPVATECHCGKCDSDSTDCTVRGLGPSYCSFNEMKE.

The N-terminal stretch at 1–20 (MKSVQLCFLFCCWRAICCKS) is a signal peptide. 6 disulfide bridges follow: Cys-21–Cys-69, Cys-35–Cys-84, Cys-38–Cys-122, Cys-46–Cys-100, Cys-50–Cys-102, and Cys-105–Cys-112. Asn-25 and Asn-42 each carry an N-linked (GlcNAc...) asparagine glycan.

The protein belongs to the glycoprotein hormones subunit beta family. As to quaternary structure, heterodimer. The active follitropin is a heterodimer composed of an alpha chain/CGA shared with other hormones and a unique beta chain/FSHB shown here.

The protein localises to the secreted. Together with the alpha chain CGA constitutes follitropin, the follicle-stimulating hormone, and provides its biological specificity to the hormone heterodimer. Binds FSHR, a G protein-coupled receptor, on target cells to activate downstream signaling pathways. Follitropin is involved in follicle development and spermatogenesis in reproductive organs. This Ailuropoda melanoleuca (Giant panda) protein is Follitropin subunit beta (FSHB).